The primary structure comprises 432 residues: Enolase (432 aa).

A (2R)-2-phosphoglycerate-binding site is contributed by Gln167. The Proton donor role is filled by Glu209. The Mg(2+) site is built by Asp246, Glu291, and Asp318. 4 residues coordinate (2R)-2-phosphoglycerate: Lys343, Arg372, Ser373, and Lys394. The active-site Proton acceptor is Lys343.

It belongs to the enolase family. In terms of assembly, component of the RNA degradosome, a multiprotein complex involved in RNA processing and mRNA degradation. Mg(2+) is required as a cofactor.

Its subcellular location is the cytoplasm. The protein localises to the secreted. It is found in the cell surface. The catalysed reaction is (2R)-2-phosphoglycerate = phosphoenolpyruvate + H2O. The protein operates within carbohydrate degradation; glycolysis; pyruvate from D-glyceraldehyde 3-phosphate: step 4/5. Functionally, catalyzes the reversible conversion of 2-phosphoglycerate (2-PG) into phosphoenolpyruvate (PEP). It is essential for the degradation of carbohydrates via glycolysis. The chain is Enolase from Aliivibrio salmonicida (strain LFI1238) (Vibrio salmonicida (strain LFI1238)).